Consider the following 140-residue polypeptide: Class I hydrophobin 1 (140 aa).

The N-terminal stretch at 1 to 18 (MKFAAVVVLAAAAAAVSA) is a signal peptide. The tract at residues 22 to 60 (AQRMARGLPPKAPIRRHGTPADTEKRSHPSSTGGGQCNT) is disordered. Intrachain disulfides connect C58–C119, C65–C113, C66–C99, and C120–C133.

The protein belongs to the fungal hydrophobin family. Self-assembles to form functional amyloid fibrils called rodlets. Self-assembly into fibrillar rodlets occurs spontaneously at hydrophobic:hydrophilic interfaces and the rodlets further associate laterally to form amphipathic monolayers.

The protein localises to the secreted. It is found in the cell wall. Its function is as follows. Aerial growth, conidiation, and dispersal of filamentous fungi in the environment rely upon a capability of their secreting small amphipathic proteins called hydrophobins (HPBs) with low sequence identity. Class I can self-assemble into an outermost layer of rodlet bundles on aerial cell surfaces, conferring cellular hydrophobicity that supports fungal growth, development and dispersal; whereas Class II form highly ordered films at water-air interfaces through intermolecular interactions but contribute nothing to the rodlet structure. This Pisolithus tinctorius (Dead man's foot) protein is Class I hydrophobin 1.